Consider the following 61-residue polypeptide: MAKKSLRVKQARPQKFKVRAYNRCLRCGRPHGYMRKFGLCRICFRELAYKGELPGIVKASW.

Positions 24, 27, 40, and 43 each coordinate Zn(2+).

This sequence belongs to the universal ribosomal protein uS14 family. Zinc-binding uS14 subfamily. As to quaternary structure, part of the 30S ribosomal subunit. Contacts proteins S3 and S10. Requires Zn(2+) as cofactor.

Functionally, binds 16S rRNA, required for the assembly of 30S particles and may also be responsible for determining the conformation of the 16S rRNA at the A site. In Moorella thermoacetica (strain ATCC 39073 / JCM 9320), this protein is Small ribosomal subunit protein uS14.